Here is a 295-residue protein sequence, read N- to C-terminus: Phosphoribosylaminoimidazole-succinocarboxamide synthase (295 aa).

The protein belongs to the SAICAR synthetase family.

The enzyme catalyses 5-amino-1-(5-phospho-D-ribosyl)imidazole-4-carboxylate + L-aspartate + ATP = (2S)-2-[5-amino-1-(5-phospho-beta-D-ribosyl)imidazole-4-carboxamido]succinate + ADP + phosphate + 2 H(+). Its pathway is purine metabolism; IMP biosynthesis via de novo pathway; 5-amino-1-(5-phospho-D-ribosyl)imidazole-4-carboxamide from 5-amino-1-(5-phospho-D-ribosyl)imidazole-4-carboxylate: step 1/2. This Corynebacterium ammoniagenes (Brevibacterium ammoniagenes) protein is Phosphoribosylaminoimidazole-succinocarboxamide synthase.